Here is a 247-residue protein sequence, read N- to C-terminus: Orotidine 5'-phosphate decarboxylase (247 aa).

Residues Asp-22, Lys-44, 71–80 (DLKFHDIPNT), Thr-131, Arg-192, Gln-201, Gly-221, and Arg-222 each bind substrate. The active-site Proton donor is Lys-73.

Belongs to the OMP decarboxylase family. Type 1 subfamily. Homodimer.

It catalyses the reaction orotidine 5'-phosphate + H(+) = UMP + CO2. The protein operates within pyrimidine metabolism; UMP biosynthesis via de novo pathway; UMP from orotate: step 2/2. Functionally, catalyzes the decarboxylation of orotidine 5'-monophosphate (OMP) to uridine 5'-monophosphate (UMP). This is Orotidine 5'-phosphate decarboxylase from Pectobacterium atrosepticum (strain SCRI 1043 / ATCC BAA-672) (Erwinia carotovora subsp. atroseptica).